Reading from the N-terminus, the 210-residue chain is Mitochondrial cardiolipin hydrolase (210 aa).

Residues 1–5 (MLLWG) are Mitochondrial intermembrane-facing. Residues 6–24 (RWKLAAGLAGLALSLELFY) form a helical membrane-spanning segment. Residues 25–210 (RYMRRRKPLR…YNFFPEKENK (186 aa)) lie on the Cytoplasmic side of the membrane. A PLD phosphodiesterase domain is found at 138–165 (SSGYMHHKFAVVDGTVVLTGSLNWTVQA). Catalysis depends on residues histidine 143, lysine 145, and aspartate 150.

Belongs to the phospholipase D family. MitoPLD/Zucchini subfamily. Homodimer.

The protein resides in the mitochondrion outer membrane. The catalysed reaction is a cardiolipin + H2O = a 1,2-diacyl-sn-glycero-3-phospho-(1'-sn-glycerol) + a 1,2-diacyl-sn-glycero-3-phosphate + H(+). Presents phospholipase and nuclease activities, depending on the different physiological conditions. Plays a key role in mitochondrial fusion and fission via its phospholipase activity. In its phospholipase role, it uses the mitochondrial lipid cardiolipin as substrate to generate phosphatidate (PA or 1,2-diacyl-sn-glycero-3-phosphate), a second messenger signaling lipid. Production of PA facilitates Mitofusin-mediated fusion, whereas the cleavage of PA by the Lipin family of phosphatases produces diacylgycerol (DAG) which promotes mitochondrial fission. Regulates mitochondrial shape through facilitating mitochondrial fusion. During spermatogenesis, plays a critical role in PIWI-interacting RNA (piRNA) biogenesis. piRNAs provide essential protection against the activity of mobile genetic elements. piRNA-mediated transposon silencing is thus critical for maintaining genome stability, in particular in germline cells when transposons are mobilized as a consequence of wide-spread genomic demethylation. Has been shown to be a backbone-non-specific, single strand-specific nuclease, cleaving either RNA or DNA substrates with similar affinity. Produces 5' phosphate and 3' hydroxyl termini, suggesting it could directly participate in the processing of primary piRNA transcripts. Has been proposed to act as a cardiolipin hydrolase to generate phosphatidic acid at mitochondrial surface. Although it cannot be excluded that it can act as a phospholipase in some circumstances, this activity could not be confirmed. This is Mitochondrial cardiolipin hydrolase (pld6) from Xenopus laevis (African clawed frog).